Consider the following 410-residue polypeptide: LL-diaminopimelate aminotransferase (410 aa).

Substrate contacts are provided by Y15 and G42. Pyridoxal 5'-phosphate contacts are provided by residues Y72, 108 to 109 (SK), Y132, N187, Y218, and 246 to 248 (SFS). Substrate is bound by residues K109, Y132, and N187. Position 249 is an N6-(pyridoxal phosphate)lysine (K249). Residues R257 and N292 each coordinate pyridoxal 5'-phosphate. Substrate contacts are provided by N292 and R388.

This sequence belongs to the class-I pyridoxal-phosphate-dependent aminotransferase family. LL-diaminopimelate aminotransferase subfamily. As to quaternary structure, homodimer. Requires pyridoxal 5'-phosphate as cofactor.

The enzyme catalyses (2S,6S)-2,6-diaminopimelate + 2-oxoglutarate = (S)-2,3,4,5-tetrahydrodipicolinate + L-glutamate + H2O + H(+). The protein operates within amino-acid biosynthesis; L-lysine biosynthesis via DAP pathway; LL-2,6-diaminopimelate from (S)-tetrahydrodipicolinate (aminotransferase route): step 1/1. Functionally, involved in the synthesis of meso-diaminopimelate (m-DAP or DL-DAP), required for both lysine and peptidoglycan biosynthesis. Catalyzes the direct conversion of tetrahydrodipicolinate to LL-diaminopimelate. In Thermosynechococcus vestitus (strain NIES-2133 / IAM M-273 / BP-1), this protein is LL-diaminopimelate aminotransferase.